The primary structure comprises 134 residues: Small ribosomal subunit protein bS6 (134 aa).

Positions 103–134 (AAPVKSAEEGTEEVAAEAATEAPAETTTTVEG) are disordered. Low complexity predominate over residues 118-134 (AEAATEAPAETTTTVEG).

It belongs to the bacterial ribosomal protein bS6 family.

Binds together with bS18 to 16S ribosomal RNA. This Citrifermentans bemidjiense (strain ATCC BAA-1014 / DSM 16622 / JCM 12645 / Bem) (Geobacter bemidjiensis) protein is Small ribosomal subunit protein bS6.